The primary structure comprises 135 residues: Transcription antitermination protein NusB (135 aa).

The protein belongs to the NusB family.

Its function is as follows. Involved in transcription antitermination. Required for transcription of ribosomal RNA (rRNA) genes. Binds specifically to the boxA antiterminator sequence of the ribosomal RNA (rrn) operons. In Shewanella pealeana (strain ATCC 700345 / ANG-SQ1), this protein is Transcription antitermination protein NusB.